A 485-amino-acid chain; its full sequence is Protein nucleotidyltransferase YdiU (485 aa).

ATP-binding residues include Gly-90, Gly-92, Arg-93, Lys-113, Asp-125, Gly-126, Arg-176, and Arg-183. Asp-252 (proton acceptor) is an active-site residue. The Mg(2+) site is built by Asn-253 and Asp-262. Asp-262 lines the ATP pocket.

This sequence belongs to the SELO family. It depends on Mg(2+) as a cofactor. The cofactor is Mn(2+).

It catalyses the reaction L-seryl-[protein] + ATP = 3-O-(5'-adenylyl)-L-seryl-[protein] + diphosphate. The catalysed reaction is L-threonyl-[protein] + ATP = 3-O-(5'-adenylyl)-L-threonyl-[protein] + diphosphate. The enzyme catalyses L-tyrosyl-[protein] + ATP = O-(5'-adenylyl)-L-tyrosyl-[protein] + diphosphate. It carries out the reaction L-histidyl-[protein] + UTP = N(tele)-(5'-uridylyl)-L-histidyl-[protein] + diphosphate. It catalyses the reaction L-seryl-[protein] + UTP = O-(5'-uridylyl)-L-seryl-[protein] + diphosphate. The catalysed reaction is L-tyrosyl-[protein] + UTP = O-(5'-uridylyl)-L-tyrosyl-[protein] + diphosphate. Functionally, nucleotidyltransferase involved in the post-translational modification of proteins. It can catalyze the addition of adenosine monophosphate (AMP) or uridine monophosphate (UMP) to a protein, resulting in modifications known as AMPylation and UMPylation. This Aliivibrio salmonicida (strain LFI1238) (Vibrio salmonicida (strain LFI1238)) protein is Protein nucleotidyltransferase YdiU.